Consider the following 224-residue polypeptide: Propanediol dehydratase medium subunit (224 aa).

Residues 1–18 (MEINEKLLRQIIEDVLSE) form a targets protein to the BMC region.

Belongs to the diol/glycerol dehydratase medium subunit family. In terms of assembly, the propanediol dehydratase enzyme is a heterotrimeric complex composed of a large (PduC), a medium (PduD) and a small (PduE) subunit. Adenosylcob(III)alamin is required as a cofactor.

Its subcellular location is the bacterial microcompartment. The enzyme catalyses propane-1,2-diol = propanal + H2O. It participates in polyol metabolism; 1,2-propanediol degradation. Its function is as follows. Part of the PduCDE complex that catalyzes the dehydration of 1,2-propanediol (1,2-PD) to propionaldehyde. This subunit is directly targeted to the bacterial microcompartment (BMC). Expression of a cosmid containing the full 21-gene pdu operon in E.coli allows E.coli to grow on 1,2-propanediol (1,2-PD) with the appearance of BMCs in its cytoplasm. In terms of biological role, the 1,2-PD-specific bacterial microcompartment (BMC) concentrates low levels of 1,2-PD catabolic enzymes, concentrates volatile reaction intermediates thus enhancing pathway flux and keeps the level of toxic, mutagenic propionaldehyde low. In Citrobacter freundii, this protein is Propanediol dehydratase medium subunit.